Here is a 249-residue protein sequence, read N- to C-terminus: MNVLIHGFGAMGRIVEEVAHAQGVNVTAIVSPGSDEHTATLNEVDVPVDVVIDFSNPALLPDLLAFGRERNIPLVIATTGFTPEELAEIETASQEIPIFQSYNTSYGIALLKQLLDQLVPLTLGYDIEVIEAHHRKKVDAPSGTAELLARAIEAKRDVTPIYERTSRREARGAEELGMHSIRGGTIFGEHTVLFAGDDEMIELKHTALSKRVFANGALAAAATIIDRPAGLYNLSNLYEEATHVTHKRL.

NAD(+)-binding positions include 77–79 (ATT) and 101–104 (SYNT). H133 acts as the Proton donor/acceptor in catalysis. H134 is a binding site for (S)-2,3,4,5-tetrahydrodipicolinate. K137 acts as the Proton donor in catalysis. 143–144 (GT) contacts (S)-2,3,4,5-tetrahydrodipicolinate.

This sequence belongs to the DapB family.

It is found in the cytoplasm. It catalyses the reaction (S)-2,3,4,5-tetrahydrodipicolinate + NAD(+) + H2O = (2S,4S)-4-hydroxy-2,3,4,5-tetrahydrodipicolinate + NADH + H(+). It carries out the reaction (S)-2,3,4,5-tetrahydrodipicolinate + NADP(+) + H2O = (2S,4S)-4-hydroxy-2,3,4,5-tetrahydrodipicolinate + NADPH + H(+). The protein operates within amino-acid biosynthesis; L-lysine biosynthesis via DAP pathway; (S)-tetrahydrodipicolinate from L-aspartate: step 4/4. In terms of biological role, catalyzes the conversion of 4-hydroxy-tetrahydrodipicolinate (HTPA) to tetrahydrodipicolinate. The protein is 4-hydroxy-tetrahydrodipicolinate reductase of Exiguobacterium sp. (strain ATCC BAA-1283 / AT1b).